The sequence spans 213 residues: N-(5'-phosphoribosyl)anthranilate isomerase (213 aa).

This sequence belongs to the TrpF family.

The catalysed reaction is N-(5-phospho-beta-D-ribosyl)anthranilate = 1-(2-carboxyphenylamino)-1-deoxy-D-ribulose 5-phosphate. It participates in amino-acid biosynthesis; L-tryptophan biosynthesis; L-tryptophan from chorismate: step 3/5. The protein is N-(5'-phosphoribosyl)anthranilate isomerase of Hahella chejuensis (strain KCTC 2396).